Reading from the N-terminus, the 760-residue chain is Elongation factor G, mitochondrial (760 aa).

A mitochondrion-targeting transit peptide spans 1-37 (MIRGMLPRGLRALRPSVSPTVVSSSLHRNFHSSIRRF). The 282-residue stretch at 68-349 (SRLRNIGVSA…AVVDYLPQPN (282 aa)) folds into the tr-type G domain. Residues 77 to 84 (AHIDSGKT), 148 to 152 (DTPGH), and 202 to 205 (NKMD) contribute to the GTP site.

The protein belongs to the TRAFAC class translation factor GTPase superfamily. Classic translation factor GTPase family. EF-G/EF-2 subfamily.

It localises to the mitochondrion. Its pathway is protein biosynthesis; polypeptide chain elongation. Functionally, mitochondrial GTPase that catalyzes the GTP-dependent ribosomal translocation step during translation elongation. During this step, the ribosome changes from the pre-translocational (PRE) to the post-translocational (POST) state as the newly formed A-site-bound peptidyl-tRNA and P-site-bound deacylated tRNA move to the P and E sites, respectively. Catalyzes the coordinated movement of the two tRNA molecules, the mRNA and conformational changes in the ribosome. The sequence is that of Elongation factor G, mitochondrial from Meyerozyma guilliermondii (strain ATCC 6260 / CBS 566 / DSM 6381 / JCM 1539 / NBRC 10279 / NRRL Y-324) (Yeast).